A 60-amino-acid chain; its full sequence is Large ribosomal subunit protein uL30 (60 aa).

Belongs to the universal ribosomal protein uL30 family. As to quaternary structure, part of the 50S ribosomal subunit.

In Finegoldia magna (strain ATCC 29328 / DSM 20472 / WAL 2508) (Peptostreptococcus magnus), this protein is Large ribosomal subunit protein uL30.